The sequence spans 427 residues: GTPase Obg (427 aa).

The region spanning 1-158 (MFVDIAKIYV…LWVILELKVL (158 aa)) is the Obg domain. Positions 159–330 (ADVGLIGYPN…VLKRAYELLK (172 aa)) constitute an OBG-type G domain. GTP is bound by residues 165–172 (GYPNVGKS), 190–194 (FTTKY), 212–215 (DIPG), 282–285 (NKMD), and 311–313 (SAA). Mg(2+) is bound by residues S172 and T192. The region spanning 347 to 427 (FVYYKKKDVK…ILDVEFEYYE (81 aa)) is the OCT domain.

The protein belongs to the TRAFAC class OBG-HflX-like GTPase superfamily. OBG GTPase family. In terms of assembly, monomer. Mg(2+) is required as a cofactor.

The protein localises to the cytoplasm. An essential GTPase which binds GTP, GDP and possibly (p)ppGpp with moderate affinity, with high nucleotide exchange rates and a fairly low GTP hydrolysis rate. Plays a role in control of the cell cycle, stress response, ribosome biogenesis and in those bacteria that undergo differentiation, in morphogenesis control. This chain is GTPase Obg, found in Caldicellulosiruptor bescii (strain ATCC BAA-1888 / DSM 6725 / KCTC 15123 / Z-1320) (Anaerocellum thermophilum).